Reading from the N-terminus, the 421-residue chain is Flap endonuclease 1 (421 aa).

The tract at residues 1–109 is N-domain; it reads MGIKGLAKLL…HELIKRREKR (109 aa). Position 34 (Asp-34) interacts with Mg(2+). DNA is bound by residues Arg-47 and Arg-75. 5 residues coordinate Mg(2+): Asp-91, Glu-163, Glu-165, Asp-184, and Asp-186. The tract at residues 127–258 is I-domain; sequence EQDKQSKRLV…KTALKLIREH (132 aa). DNA is bound at residue Glu-163. DNA contacts are provided by Gly-236 and Asp-238. Asp-238 is a Mg(2+) binding site. The disordered stretch occupies residues 284-307; it reads KKLDAQSDDDDEEGVESPSKEENN. Residues 289 to 298 show a composition bias toward acidic residues; sequence QSDDDDEEGV. The tract at residues 379 to 387 is interaction with PCNA; sequence PQTRMDSFF. The segment at 398 to 421 is disordered; the sequence is SAAKRKADAAKAKAAVSKKKTKKH.

The protein belongs to the XPG/RAD2 endonuclease family. FEN1 subfamily. Interacts with PCNA. Three molecules of FEN1 bind to one PCNA trimer with each molecule binding to one PCNA monomer. PCNA stimulates the nuclease activity without altering cleavage specificity. Requires Mg(2+) as cofactor. Phosphorylated. Phosphorylation upon DNA damage induces relocalization to the nuclear plasma.

It is found in the nucleus. The protein resides in the nucleolus. Its subcellular location is the nucleoplasm. It localises to the mitochondrion. Functionally, structure-specific nuclease with 5'-flap endonuclease and 5'-3' exonuclease activities involved in DNA replication and repair. During DNA replication, cleaves the 5'-overhanging flap structure that is generated by displacement synthesis when DNA polymerase encounters the 5'-end of a downstream Okazaki fragment. It enters the flap from the 5'-end and then tracks to cleave the flap base, leaving a nick for ligation. Also involved in the long patch base excision repair (LP-BER) pathway, by cleaving within the apurinic/apyrimidinic (AP) site-terminated flap. Acts as a genome stabilization factor that prevents flaps from equilibrating into structures that lead to duplications and deletions. Also possesses 5'-3' exonuclease activity on nicked or gapped double-stranded DNA, and exhibits RNase H activity. Also involved in replication and repair of rDNA and in repairing mitochondrial DNA. The polypeptide is Flap endonuclease 1 (Phaeodactylum tricornutum (strain CCAP 1055/1)).